The primary structure comprises 397 residues: Histidinol-phosphate aminotransferase (397 aa).

Position 247 is an N6-(pyridoxal phosphate)lysine (K247).

This sequence belongs to the class-II pyridoxal-phosphate-dependent aminotransferase family. Histidinol-phosphate aminotransferase subfamily. In terms of assembly, homodimer. Pyridoxal 5'-phosphate serves as cofactor.

It carries out the reaction L-histidinol phosphate + 2-oxoglutarate = 3-(imidazol-4-yl)-2-oxopropyl phosphate + L-glutamate. It functions in the pathway amino-acid biosynthesis; L-histidine biosynthesis; L-histidine from 5-phospho-alpha-D-ribose 1-diphosphate: step 7/9. The chain is Histidinol-phosphate aminotransferase from Frankia casuarinae (strain DSM 45818 / CECT 9043 / HFP020203 / CcI3).